The sequence spans 275 residues: Alpha carbonic anhydrase 7 (275 aa).

The N-terminal stretch at 1-27 (MVNYSSISCIFFVALFSIFTIVSISSA) is a signal peptide. 2 N-linked (GlcNAc...) asparagine glycosylation sites follow: Asn3 and Asn96. Residues 38 to 272 (REFNYKKNDE…TNKRIVHLYR (235 aa)) enclose the Alpha-carbonic anhydrase domain. A disulfide bridge connects residues Cys63 and Cys222. The active-site Proton acceptor is the His104. Zn(2+) is bound by residues His130, His132, and His149. 218–219 (TT) provides a ligand contact to substrate. The N-linked (GlcNAc...) asparagine glycan is linked to Asn225.

Belongs to the alpha-class carbonic anhydrase family. It depends on Zn(2+) as a cofactor. In terms of processing, N-glycosylated.

The protein localises to the plastid. Its subcellular location is the chloroplast stroma. The enzyme catalyses hydrogencarbonate + H(+) = CO2 + H2O. Reversible hydration of carbon dioxide. This is Alpha carbonic anhydrase 7 (ACA7) from Arabidopsis thaliana (Mouse-ear cress).